The primary structure comprises 209 residues: Uracil phosphoribosyltransferase (209 aa).

5-phospho-alpha-D-ribose 1-diphosphate contacts are provided by residues arginine 79, arginine 104, and 131-139; that span reads DPMLATGGS. Uracil-binding positions include isoleucine 194 and 199–201; that span reads GDA. Aspartate 200 is a binding site for 5-phospho-alpha-D-ribose 1-diphosphate.

The protein belongs to the UPRTase family. Mg(2+) is required as a cofactor.

It catalyses the reaction UMP + diphosphate = 5-phospho-alpha-D-ribose 1-diphosphate + uracil. Its pathway is pyrimidine metabolism; UMP biosynthesis via salvage pathway; UMP from uracil: step 1/1. Allosterically activated by GTP. Its function is as follows. Catalyzes the conversion of uracil and 5-phospho-alpha-D-ribose 1-diphosphate (PRPP) to UMP and diphosphate. The polypeptide is Uracil phosphoribosyltransferase (Lachnoclostridium phytofermentans (strain ATCC 700394 / DSM 18823 / ISDg) (Clostridium phytofermentans)).